A 324-amino-acid polypeptide reads, in one-letter code: Beta-ketoacyl-[acyl-carrier-protein] synthase III (324 aa).

Catalysis depends on residues cysteine 114 and histidine 246. The tract at residues 247 to 251 (QANLR) is ACP-binding. Asparagine 276 is a catalytic residue.

Belongs to the thiolase-like superfamily. FabH family. As to quaternary structure, homodimer.

It localises to the cytoplasm. It catalyses the reaction malonyl-[ACP] + acetyl-CoA + H(+) = 3-oxobutanoyl-[ACP] + CO2 + CoA. It participates in lipid metabolism; fatty acid biosynthesis. Its function is as follows. Catalyzes the condensation reaction of fatty acid synthesis by the addition to an acyl acceptor of two carbons from malonyl-ACP. Catalyzes the first condensation reaction which initiates fatty acid synthesis and may therefore play a role in governing the total rate of fatty acid production. Possesses both acetoacetyl-ACP synthase and acetyl transacylase activities. Its substrate specificity determines the biosynthesis of branched-chain and/or straight-chain of fatty acids. The polypeptide is Beta-ketoacyl-[acyl-carrier-protein] synthase III (Campylobacter jejuni subsp. jejuni serotype O:6 (strain 81116 / NCTC 11828)).